Reading from the N-terminus, the 354-residue chain is 2-methylisoborneol synthase (354 aa).

A disordered region spans residues 1-29 (MIELIGHETPVPSQQQHTGGVRGTSACTP). Positions 113, 114, 118, 264, 268, and 272 each coordinate Mg(2+).

This sequence belongs to the terpene synthase family. 2-methylisoborneol synthase subfamily. Mg(2+) is required as a cofactor.

It carries out the reaction (E)-2-methylgeranyl diphosphate + H2O = 2-methylisoborneol + diphosphate. Catalyzes the cyclization of 2-methylgeranyl diphosphate (2-MeGPP) to 2-methylisoborneol (2-MIB), which likely involves the intermediacy of 2-methyllinalyl diphosphate. This chain is 2-methylisoborneol synthase, found in Saccharopolyspora erythraea (strain ATCC 11635 / DSM 40517 / JCM 4748 / NBRC 13426 / NCIMB 8594 / NRRL 2338).